A 555-amino-acid polypeptide reads, in one-letter code: MYNGKDRAQNSYQPMYQRPMQVQGQQQAQSFVGKKNTIGSVHGKAPMLMANNDVFTIGPYRARKDRMRVSVLEKYEVIGYIAAGTYGKVYKAKRQINSGTNSANGSSLNGTNAKIPQFDSTQPKSSSSMDMQANTNALRRNLLKDEGVTPGRIRTTREDVSPHYNSQKQTLIKKPLTVFYAIKKFKTEKDGVEQLHYTGISQSACREMALCRELHNKHLTTLVEIFLERKCVHMVYEYAEHDLLQIIHFHSHPEKRMIPPRMVRSIMWQLLDGVSYLHQNWVLHRDLKPANIMVTIDGCVKIGDLGLARKFHNMLQTLYTGDKVVVTIWYRAPELLLGARHYTPAVDLWSVGCIFAELIGLQPIFKGEEAKLDSKKTVPFQVNQLQRILEVLGTPDQKIWPYLEKYPEYDQITKFPKYRDNLATWYHSAGGRDKHALSLLYHLLNYDPIKRIDAFNALEHKYFTESDIPVSENVFEGLTYKYPARRIHTNDNDIMNLGSRTKNNTQASGITAGAAANALGGLGVNRRILAAAAAAAAAVSGNNASDEPSRKKNRR.

A Protein kinase domain is found at Y75–F463. I81–V89 serves as a coordination point for ATP. The span at T100–L138 shows a compositional bias: polar residues. The tract at residues T100–S166 is disordered. Position 183 (K183) interacts with ATP. D286 acts as the Proton acceptor in catalysis.

Belongs to the protein kinase superfamily. CMGC Ser/Thr protein kinase family. CDC2/CDKX subfamily. Component of the SRB8-11 complex which consists of SRB8, SSN2/SRB9, SSN3/SRB10 and SSN8/SRB11. The SRB8-11 complex associates with the Mediator complex. The SSN3/SRB10 and SSN8/SRB11 kinase-cyclin pair also associate with the RNA polymerase II holoenzyme. Interacts with TUP1.

It is found in the nucleus. The catalysed reaction is L-seryl-[protein] + ATP = O-phospho-L-seryl-[protein] + ADP + H(+). It carries out the reaction L-threonyl-[protein] + ATP = O-phospho-L-threonyl-[protein] + ADP + H(+). It catalyses the reaction [DNA-directed RNA polymerase] + ATP = phospho-[DNA-directed RNA polymerase] + ADP + H(+). Component of the SRB8-11 complex. The SRB8-11 complex is a regulatory module of the Mediator complex which is itself involved in regulation of basal and activated RNA polymerase II-dependent transcription. The SRB8-11 complex may be involved in the transcriptional repression of a subset of genes regulated by Mediator. It may inhibit the association of the Mediator complex with RNA polymerase II to form the holoenzyme complex. The SRB8-11 complex phosphorylates the C-terminal domain (CTD) of the largest subunit of RNA polymerase II RPB1 at serines 2 and 5. The SSN3/SRB10 and SSN8/SRB11 kinase-cyclin pair may also positively and negatively regulate numerous transcriptional activators in response to changes in nutritional and physiological conditions. Phosphorylates GCN4, promoting its ubiquitin-mediated degradation, and MSN2, promoting its nuclear exclusion. Phosphorylates STE12, thereby promoting its degradation and inhibition of filamentous growth. Phosphorylates GAL4, and this phosphorylation is required for efficient galactose-inducible transcription. Also phosphorylates BDF1 and the TAF2 subunit of the TFIID complex. This is Meiotic mRNA stability protein kinase SSN3 (SSN3) from Saccharomyces cerevisiae (strain ATCC 204508 / S288c) (Baker's yeast).